Here is a 351-residue protein sequence, read N- to C-terminus: Protein-glutamate methylesterase/protein-glutamine glutaminase 2 (351 aa).

One can recognise a Response regulatory domain in the interval 5–122 (RVICVDDSAL…RDGLLDYSEL (118 aa)). Asp-56 bears the 4-aspartylphosphate mark. Residues 154 to 341 (LNSSEKLVIL…PLPAMSERIL (188 aa)) enclose the CheB-type methylesterase domain. Residues Ser-166, His-192, and Asp-289 contribute to the active site.

This sequence belongs to the CheB family. In terms of processing, phosphorylated by CheA. Phosphorylation of the N-terminal regulatory domain activates the methylesterase activity.

Its subcellular location is the cytoplasm. It catalyses the reaction [protein]-L-glutamate 5-O-methyl ester + H2O = L-glutamyl-[protein] + methanol + H(+). The catalysed reaction is L-glutaminyl-[protein] + H2O = L-glutamyl-[protein] + NH4(+). Its function is as follows. Involved in chemotaxis. Part of a chemotaxis signal transduction system that modulates chemotaxis in response to various stimuli. Catalyzes the demethylation of specific methylglutamate residues introduced into the chemoreceptors (methyl-accepting chemotaxis proteins or MCP) by CheR. Also mediates the irreversible deamidation of specific glutamine residues to glutamic acid. The polypeptide is Protein-glutamate methylesterase/protein-glutamine glutaminase 2 (Bordetella avium (strain 197N)).